Here is a 698-residue protein sequence, read N- to C-terminus: Elongation factor G 1 (698 aa).

A tr-type G domain is found at E8 to V290. GTP-binding positions include A17 to T24, D88 to H92, and N142 to D145.

This sequence belongs to the TRAFAC class translation factor GTPase superfamily. Classic translation factor GTPase family. EF-G/EF-2 subfamily.

The protein localises to the cytoplasm. In terms of biological role, catalyzes the GTP-dependent ribosomal translocation step during translation elongation. During this step, the ribosome changes from the pre-translocational (PRE) to the post-translocational (POST) state as the newly formed A-site-bound peptidyl-tRNA and P-site-bound deacylated tRNA move to the P and E sites, respectively. Catalyzes the coordinated movement of the two tRNA molecules, the mRNA and conformational changes in the ribosome. In Aliivibrio fischeri (strain ATCC 700601 / ES114) (Vibrio fischeri), this protein is Elongation factor G 1.